The chain runs to 620 residues: Glutathione-regulated potassium-efflux system protein KefC (620 aa).

Topologically, residues 1–3 are periplasmic; sequence MDS. The chain crosses the membrane as a helical span at residues 4–24; the sequence is HTLVQALIYLGSAALIVPIAV. A topological domain (cytoplasmic) is located at residue Arg25. The chain crosses the membrane as a helical span at residues 26–46; the sequence is LGLGSVLGYLIAGCIIGPWGL. Over 47–53 the chain is Periplasmic; that stretch reads RLVTDAE. Residues 54–74 form a helical membrane-spanning segment; it reads SILHFAEIGVVLMLFIIGLEL. The Cytoplasmic segment spans residues 75-89; sequence DPQRLWKLRAAVFGG. A helical transmembrane segment spans residues 90–110; that stretch reads GALQMVICGGLLGLFCMLLGL. Residues 111–113 are Periplasmic-facing; the sequence is RWQ. Residues 114 to 134 form a helical membrane-spanning segment; that stretch reads VAELIGMTLALSSTAIAMQAM. Over 135-148 the chain is Cytoplasmic; it reads NERNLMVTQMGRSA. The chain crosses the membrane as a helical span at residues 149 to 169; the sequence is FAVLLFQDIAAIPLVAMIPLL. The Periplasmic segment spans residues 170-177; sequence AASSASTT. A helical transmembrane segment spans residues 178–198; it reads MGAFALSALKVAGALVLVVLL. Over 199 to 213 the chain is Cytoplasmic; that stretch reads GRYVTRPALRFVARS. Residues 214 to 233 form a helical membrane-spanning segment; that stretch reads GLREVFSAVALFLVFGFGLL. Residues 234–236 lie on the Periplasmic side of the membrane; sequence LEE. Residues 237–254 form a helical membrane-spanning segment; the sequence is VGLSMAMGAFLAGVLLAS. Topologically, residues 255–269 are cytoplasmic; that stretch reads SEYRHALESDIEPFK. The chain crosses the membrane as a helical span at residues 270–290; sequence GLLLGLFFIGVGMSIDFGTLI. The Periplasmic segment spans residues 291 to 293; sequence ENP. Residues 294–314 traverse the membrane as a helical segment; it reads LRIVILLLGFLIIKIAMLWLI. Residues 315 to 326 are Cytoplasmic-facing; that stretch reads ARPLQVPNKQRR. Residues 327-347 traverse the membrane as a helical segment; it reads WFAVLLGQGSEFAFVVFGAAQ. Over 348-358 the chain is Periplasmic; that stretch reads MANVLEPEWAK. Residues 359 to 379 traverse the membrane as a helical segment; that stretch reads SLTLAVALSMAATPILLVILN. Topologically, residues 380–620 are cytoplasmic; the sequence is RLEQSSTEEA…ADEPETKPSS (241 aa). Residues 399 to 518 enclose the RCK N-terminal domain; sequence QPRVIIAGFG…AGVEKPERET (120 aa). A disordered region spans residues 597–620; the sequence is GWQGTEEGKHTGNMADEPETKPSS.

Belongs to the monovalent cation:proton antiporter 2 (CPA2) transporter (TC 2.A.37) family. KefC subfamily. As to quaternary structure, homodimer. Interacts with the regulatory subunit KefF.

The protein localises to the cell inner membrane. In terms of biological role, pore-forming subunit of a potassium efflux system that confers protection against electrophiles. Catalyzes K(+)/H(+) antiport. This is Glutathione-regulated potassium-efflux system protein KefC from Shigella flexneri.